An 822-amino-acid polypeptide reads, in one-letter code: uncharacterized protein (822 aa).

Over 1–13 (MCHNSVRSGNKAG) the chain is Cytoplasmic. Residues 14–34 (FLGIKFGSALLSIATGAIAIA) traverse the membrane as a helical segment. The Extracellular segment spans residues 35–44 (LLCKFHDHEA). Residues 45 to 65 (VLIVIVCSTLLYGIPSLISFI) traverse the membrane as a helical segment. Topologically, residues 66–76 (TETVFAPSKFH) are cytoplasmic. A helical transmembrane segment spans residues 77-97 (IGYFYNVLNFALPLITMGCTV). The Extracellular portion of the chain corresponds to 98-120 (DYFHNTLRSPISVQSESHRVYIT). Residues 121-141 (TLDSLLIFTLFINGIQLGFFL) traverse the membrane as a helical segment. The Cytoplasmic portion of the chain corresponds to 142-822 (KDGNANNFGS…PVEELVSPSK (681 aa)). The interval 271 to 290 (RNTQQATKVPTEKKSNHRSS) is disordered. Residue Ser-690 is modified to Phosphoserine. Residues 698 to 712 (TLQSSHSPTKSTSGN) show a composition bias toward polar residues. Disordered stretches follow at residues 698-728 (TLQS…STVN) and 751-783 (NGEE…GYPE). Residues 761–776 (QSIQSSSSGSEQESAG) are compositionally biased toward low complexity.

The protein resides in the membrane. This is an uncharacterized protein from Saccharomyces cerevisiae (strain ATCC 204508 / S288c) (Baker's yeast).